The following is a 170-amino-acid chain: MASLFASLGRSLIKLLIVLPVIIGLSISSPAMAAQWDAETLTVPAGSGGQQVTFSESEIKSASKLFKSNCATCHNQGVTKTNQNVGLDLEALSLASPARDNVDGLVEFLKNPMSYDGEYSIADTHPGISSSDVYVQMRTLNDEDLRLIAGYILTAEKVQGDQWGGGKIYF.

Residues 1–33 (MASLFASLGRSLIKLLIVLPVIIGLSISSPAMA) form the signal peptide. Positions 70, 73, 74, and 125 each coordinate heme c.

Belongs to the cytochrome c family. PsbV subfamily. PSII is composed of 1 copy each of membrane proteins PsbA, PsbB, PsbC, PsbD, PsbE, PsbF, PsbH, PsbI, PsbJ, PsbK, PsbL, PsbM, PsbT, PsbX, PsbY, Psb30/Ycf12, peripheral proteins PsbO, CyanoQ (PsbQ), PsbU, PsbV and a large number of cofactors. It forms dimeric complexes. Requires heme c as cofactor.

Its subcellular location is the cellular thylakoid membrane. One of the extrinsic, lumenal subunits of photosystem II (PSII). PSII is a light-driven water plastoquinone oxidoreductase, using light energy to abstract electrons from H(2)O, generating a proton gradient subsequently used for ATP formation. The extrinsic proteins stabilize the structure of photosystem II oxygen-evolving complex (OEC), the ion environment of oxygen evolution and protect the OEC against heat-induced inactivation. Low-potential cytochrome c that plays a role in the OEC of PSII. The chain is Photosystem II extrinsic protein V from Prochlorococcus marinus (strain MIT 9303).